The primary structure comprises 675 residues: Glycerophosphocholine phosphodiesterase GPCPD1 (675 aa).

A CBM20 domain is found at 1 to 115 (MTPSQVTFEI…IIIDDGQFGI (115 aa)). Residues Arg70 and 88 to 89 (HK) contribute to the substrate site. Phosphoserine is present on residues Ser178 and Ser427. In terms of domain architecture, GP-PDE spans 321-621 (PLDVGHRGAG…DRIYDWMPEQ (301 aa)). Tyr611 bears the Phosphotyrosine mark.

The protein belongs to the glycerophosphoryl diester phosphodiesterase family. Widely expressed with highest levels in skeletal muscle and heart.

The protein resides in the cytoplasm. The protein localises to the cytosol. The catalysed reaction is sn-glycerol 3-phosphocholine + H2O = sn-glycerol 3-phosphate + choline + H(+). Functionally, may be involved in the negative regulation of skeletal muscle differentiation, independently of its glycerophosphocholine phosphodiesterase activity. The chain is Glycerophosphocholine phosphodiesterase GPCPD1 (Gpcpd1) from Mus musculus (Mouse).